The sequence spans 820 residues: G-type lectin S-receptor-like serine/threonine-protein kinase At1g11280 (820 aa).

An N-terminal signal peptide occupies residues 1-28 (MGIHLGEIGIVLFPWFLWLSLFLSCGYA). The region spanning 29–148 (AITISSPLTL…VSENLLWQSF (120 aa)) is the Bulb-type lectin domain. At 29-434 (AITISSPLTL…SELAGSRRTK (406 aa)) the chain is on the extracellular side. 5 N-linked (GlcNAc...) asparagine glycosylation sites follow: Asn-57, Asn-92, Asn-98, Asn-241, and Asn-272. The EGF-like domain occupies 283 to 319 (PANLCDLYGACGPFGLCVTSNPTKCKCMKGFVPKYKE). 2 disulfides stabilise this stretch: Cys-287–Cys-299 and Cys-293–Cys-307. 3 N-linked (GlcNAc...) asparagine glycosylation sites follow: Asn-325, Asn-341, and Asn-384. Residues 338–422 (CQANLSTKTQ…VGGEFLSIRL (85 aa)) form the PAN domain. 2 disulfides stabilise this stretch: Cys-377–Cys-398 and Cys-381–Cys-387. Residues 435 to 455 (IIVGSISLSIFVILAFGSYKY) form a helical membrane-spanning segment. The Cytoplasmic portion of the chain corresponds to 456–820 (WRYRAKQNVG…HVTQTEIYGR (365 aa)). The 288-residue stretch at 505 to 792 (FNVSNKLGQG…DLPRPKQPLF (288 aa)) folds into the Protein kinase domain. Residues 511–519 (LGQGGFGPV) and Lys-533 contribute to the ATP site. 2 positions are modified to phosphoserine: Ser-539 and Ser-554. The tract at residues 594 to 611 (TLKLQIDWPKRFNIIQGV) is caM-binding. Residue Asp-630 is the Proton acceptor of the active site. Phosphoserine occurs at positions 634 and 647. Phosphothreonine is present on Thr-664. 3 positions are modified to phosphoserine: Ser-707, Ser-708, and Ser-808. Thr-815 carries the phosphothreonine modification.

This sequence belongs to the protein kinase superfamily. Ser/Thr protein kinase family.

It localises to the cell membrane. The enzyme catalyses L-seryl-[protein] + ATP = O-phospho-L-seryl-[protein] + ADP + H(+). The catalysed reaction is L-threonyl-[protein] + ATP = O-phospho-L-threonyl-[protein] + ADP + H(+). The chain is G-type lectin S-receptor-like serine/threonine-protein kinase At1g11280 from Arabidopsis thaliana (Mouse-ear cress).